The following is a 525-amino-acid chain: Patatin-like protein 8 (525 aa).

The segment at 1-50 (MNRRYEKPPPLSVSSKGKKKHFVNHTAPNTPGNYERTQTSPTLSTARSHE) is disordered. Positions 26 to 46 (TAPNTPGNYERTQTSPTLSTA) are enriched in polar residues. The region spanning 124–338 (LSIDGGGMRG…AMSNPTAAAI (215 aa)) is the PNPLA domain. Residues 128 to 133 (GGGMRG) carry the GXGXXG motif. Catalysis depends on serine 168, which acts as the Nucleophile.

It belongs to the patatin family. In terms of tissue distribution, specifically expressed in roots.

Functionally, possesses non-specific lipolytic acyl hydrolase (LAH) activity. Hydrolyzes phospholipids as well as galactolipids. May play a role in disease resistance. The protein is Patatin-like protein 8 (PLP8) of Arabidopsis thaliana (Mouse-ear cress).